We begin with the raw amino-acid sequence, 258 residues long: Uroplakin-1a (258 aa).

Over 1 to 14 (MASAAAAEAEKGSP) the chain is Cytoplasmic. Residues 15 to 35 (VVVGLLVVGNIIILLSGLSLF) traverse the membrane as a helical segment. Over 36-59 (AETIWVTADQYRVYPLMGVSGKDD) the chain is Extracellular. Residues 60-86 (VFAGAWIAIFCGFSFFMVASFGVGAAL) form a helical membrane-spanning segment. Topologically, residues 87–91 (CRRRS) are cytoplasmic. A helical membrane pass occupies residues 92–112 (MVLTYLVLMLIVYIFECASCI). Topologically, residues 113–230 (TSYTHRDYMV…HIGHAIDSYT (118 aa)) are extracellular. Asn-170 is a glycosylation site (N-linked (GlcNAc...) asparagine). Residues 231–252 (WGISWFGFAILMWTLPVMLIAM) form a helical membrane-spanning segment. The Cytoplasmic portion of the chain corresponds to 253-258 (YFYTML).

The protein belongs to the tetraspanin (TM4SF) family. As to quaternary structure, homodimer; disulfide-linked. Interacts with uroplakin-2 (UPK2). In terms of tissue distribution, high expression restricted to ureteric urothelium (most superficial cells); low expression in prostate. Expression in normal urothelial cells is lost in culture. Some expression in tumor cell lines derived from urothelial malignancies.

It is found in the membrane. Component of the asymmetric unit membrane (AUM); a highly specialized biomembrane elaborated by terminally differentiated urothelial cells. May play an important role in normal bladder epithelial physiology, possibly in regulating membrane permeability of superficial umbrella cells or in stabilizing the apical membrane through AUM/cytoskeletal interactions. In Homo sapiens (Human), this protein is Uroplakin-1a (UPK1A).